The primary structure comprises 327 residues: Phenylalanine--tRNA ligase alpha subunit (327 aa).

Glutamate 252 lines the Mg(2+) pocket.

The protein belongs to the class-II aminoacyl-tRNA synthetase family. Phe-tRNA synthetase alpha subunit type 1 subfamily. Tetramer of two alpha and two beta subunits. Mg(2+) serves as cofactor.

It localises to the cytoplasm. The enzyme catalyses tRNA(Phe) + L-phenylalanine + ATP = L-phenylalanyl-tRNA(Phe) + AMP + diphosphate + H(+). In Vibrio parahaemolyticus serotype O3:K6 (strain RIMD 2210633), this protein is Phenylalanine--tRNA ligase alpha subunit.